Consider the following 525-residue polypeptide: Putative ankyrin repeat protein FPV228 (525 aa).

9 ANK repeats span residues 39 to 71 (HPDN…TRDI), 72 to 122 (LGNT…ACNN), 123 to 152 (LNQT…KVNI), 156 to 185 (YGNT…DVNI), 190 to 226 (YWYS…TRCR), 227 to 254 (LNTT…DINA), 258 to 287 (NDNA…DVNM), 291 to 320 (RGKT…NPNI), and 324 to 353 (IMNT…DINH).

This Fowlpox virus (strain NVSL) (FPV) protein is Putative ankyrin repeat protein FPV228.